The primary structure comprises 430 residues: Serine--tRNA ligase (430 aa).

236-238 (TAE) provides a ligand contact to L-serine. 267-269 (RSE) provides a ligand contact to ATP. Glu290 serves as a coordination point for L-serine. 354–357 (EISS) serves as a coordination point for ATP. Residue Ser390 coordinates L-serine.

This sequence belongs to the class-II aminoacyl-tRNA synthetase family. Type-1 seryl-tRNA synthetase subfamily. As to quaternary structure, homodimer. The tRNA molecule binds across the dimer.

Its subcellular location is the cytoplasm. It carries out the reaction tRNA(Ser) + L-serine + ATP = L-seryl-tRNA(Ser) + AMP + diphosphate + H(+). The catalysed reaction is tRNA(Sec) + L-serine + ATP = L-seryl-tRNA(Sec) + AMP + diphosphate + H(+). Its pathway is aminoacyl-tRNA biosynthesis; selenocysteinyl-tRNA(Sec) biosynthesis; L-seryl-tRNA(Sec) from L-serine and tRNA(Sec): step 1/1. Catalyzes the attachment of serine to tRNA(Ser). Is also able to aminoacylate tRNA(Sec) with serine, to form the misacylated tRNA L-seryl-tRNA(Sec), which will be further converted into selenocysteinyl-tRNA(Sec). The polypeptide is Serine--tRNA ligase (Mannheimia succiniciproducens (strain KCTC 0769BP / MBEL55E)).